Consider the following 323-residue polypeptide: o-succinylbenzoate synthase (323 aa).

The Proton donor role is filled by lysine 134. Mg(2+)-binding residues include aspartate 162, glutamate 191, and aspartate 214. Catalysis depends on lysine 236, which acts as the Proton acceptor.

The protein belongs to the mandelate racemase/muconate lactonizing enzyme family. MenC type 1 subfamily. A divalent metal cation is required as a cofactor.

The enzyme catalyses (1R,6R)-6-hydroxy-2-succinyl-cyclohexa-2,4-diene-1-carboxylate = 2-succinylbenzoate + H2O. It participates in quinol/quinone metabolism; 1,4-dihydroxy-2-naphthoate biosynthesis; 1,4-dihydroxy-2-naphthoate from chorismate: step 4/7. The protein operates within quinol/quinone metabolism; menaquinone biosynthesis. Converts 2-succinyl-6-hydroxy-2,4-cyclohexadiene-1-carboxylate (SHCHC) to 2-succinylbenzoate (OSB). This Yersinia pseudotuberculosis serotype I (strain IP32953) protein is o-succinylbenzoate synthase.